The chain runs to 147 residues: NAD(P)H-quinone oxidoreductase subunit N (147 aa).

Belongs to the complex I NdhN subunit family. NDH-1 can be composed of about 15 different subunits; different subcomplexes with different compositions have been identified which probably have different functions.

The protein resides in the cellular thylakoid membrane. The catalysed reaction is a plastoquinone + NADH + (n+1) H(+)(in) = a plastoquinol + NAD(+) + n H(+)(out). It catalyses the reaction a plastoquinone + NADPH + (n+1) H(+)(in) = a plastoquinol + NADP(+) + n H(+)(out). NDH-1 shuttles electrons from an unknown electron donor, via FMN and iron-sulfur (Fe-S) centers, to quinones in the respiratory and/or the photosynthetic chain. The immediate electron acceptor for the enzyme in this species is believed to be plastoquinone. Couples the redox reaction to proton translocation, and thus conserves the redox energy in a proton gradient. Cyanobacterial NDH-1 also plays a role in inorganic carbon-concentration. The polypeptide is NAD(P)H-quinone oxidoreductase subunit N (Synechococcus sp. (strain JA-3-3Ab) (Cyanobacteria bacterium Yellowstone A-Prime)).